The sequence spans 1770 residues: Transposon Ty2-OR2 Gag-Pol polyprotein (1770 aa).

Disordered regions lie at residues 1–88 (MESQ…YQQH) and 359–449 (QHSE…SNDE). Polar residues-rich tracts occupy residues 19–39 (ASVT…SASN) and 49–60 (KVNSQEETTPGT). The tract at residues 295 to 397 (ENNINVSDRL…SSKPRAAKAH (103 aa)) is RNA-binding. The span at 369–381 (TSPNTTNTKVTTR) shows a compositional bias: low complexity. 2 stretches are compositionally biased toward polar residues: residues 399 to 408 (IATSSKFSRV) and 415 to 435 (ESTV…GQQQ). Residue D457 is the For protease activity; shared with dimeric partner of the active site. Positions 579-636 (NVNKSKSVNKYPYPLIHRMLGHANFRSIQKSLKKNAVTYLKESDIEWSNASTYQCPDC) are integrase-type zinc finger-like. Residues 656–831 (ESYEPFQYLH…AGLDITTILP (176 aa)) form the Integrase catalytic domain. Mg(2+) is bound by residues D667 and D732. Disordered stretches follow at residues 1005–1038 (GGTI…MIDL), 1057–1135 (GGTE…KSSK), 1146–1165 (LPLP…VSKD), and 1170–1205 (HSRQ…TEIE). Composition is skewed to polar residues over residues 1009–1024 (ESDT…FTAR) and 1065–1082 (QRNS…STPS). The span at 1151–1165 (LTHKSPTDTSDVSKD) shows a compositional bias: basic and acidic residues. Positions 1193 to 1227 (KKRSLEDNETEIEVSRDTWNNKNMRSLEPPRSKKR) match the Bipartite nuclear localization signal motif. Residues 1353–1491 (NDYYITQLDI…DILGLEIKYQ (139 aa)) enclose the Reverse transcriptase Ty1/copia-type domain. 6 residues coordinate Mg(2+): D1361, D1442, D1443, D1625, E1667, and D1700. Positions 1625–1767 (DASYGNQPYY…IKTFKLLTNK (143 aa)) constitute an RNase H Ty1/copia-type domain.

As to quaternary structure, the capsid protein forms a homotrimer, from which the VLPs are assembled. The protease is a homodimer, whose active site consists of two apposed aspartic acid residues. Post-translationally, initially, virus-like particles (VLPs) are composed of the structural unprocessed proteins Gag and Gag-Pol, and also contain the host initiator methionine tRNA (tRNA(i)-Met) which serves as a primer for minus-strand DNA synthesis, and a dimer of genomic Ty RNA. Processing of the polyproteins occurs within the particle and proceeds by an ordered pathway, called maturation. First, the protease (PR) is released by autocatalytic cleavage of the Gag-Pol polyprotein, and this cleavage is a prerequisite for subsequent processing at the remaining sites to release the mature structural and catalytic proteins. Maturation takes place prior to the RT reaction and is required to produce transposition-competent VLPs.

The protein resides in the cytoplasm. It localises to the nucleus. The enzyme catalyses DNA(n) + a 2'-deoxyribonucleoside 5'-triphosphate = DNA(n+1) + diphosphate. The catalysed reaction is Endonucleolytic cleavage to 5'-phosphomonoester.. Capsid protein (CA) is the structural component of the virus-like particle (VLP), forming the shell that encapsulates the retrotransposons dimeric RNA genome. The particles are assembled from trimer-clustered units and there are holes in the capsid shells that allow for the diffusion of macromolecules. CA also has nucleocapsid-like chaperone activity, promoting primer tRNA(i)-Met annealing to the multipartite primer-binding site (PBS), dimerization of Ty2 RNA and initiation of reverse transcription. Functionally, the aspartyl protease (PR) mediates the proteolytic cleavages of the Gag and Gag-Pol polyproteins after assembly of the VLP. Its function is as follows. Reverse transcriptase/ribonuclease H (RT) is a multifunctional enzyme that catalyzes the conversion of the retro-elements RNA genome into dsDNA within the VLP. The enzyme displays a DNA polymerase activity that can copy either DNA or RNA templates, and a ribonuclease H (RNase H) activity that cleaves the RNA strand of RNA-DNA heteroduplexes during plus-strand synthesis and hydrolyzes RNA primers. The conversion leads to a linear dsDNA copy of the retrotransposon that includes long terminal repeats (LTRs) at both ends. In terms of biological role, integrase (IN) targets the VLP to the nucleus, where a subparticle preintegration complex (PIC) containing at least integrase and the newly synthesized dsDNA copy of the retrotransposon must transit the nuclear membrane. Once in the nucleus, integrase performs the integration of the dsDNA into the host genome. The chain is Transposon Ty2-OR2 Gag-Pol polyprotein (TY2B-OR2) from Saccharomyces cerevisiae (strain ATCC 204508 / S288c) (Baker's yeast).